The following is a 163-amino-acid chain: Transcription antitermination protein NusB (163 aa).

Belongs to the NusB family.

In terms of biological role, involved in transcription antitermination. Required for transcription of ribosomal RNA (rRNA) genes. Binds specifically to the boxA antiterminator sequence of the ribosomal RNA (rrn) operons. In Mycolicibacterium vanbaalenii (strain DSM 7251 / JCM 13017 / BCRC 16820 / KCTC 9966 / NRRL B-24157 / PYR-1) (Mycobacterium vanbaalenii), this protein is Transcription antitermination protein NusB.